The chain runs to 99 residues: Beta-defensin 127 (99 aa).

The signal sequence occupies residues 1-20 (MGLFMIIAILLFQKPTVTEQ). 3 cysteine pairs are disulfide-bonded: Cys24-Cys53, Cys33-Cys47, and Cys37-Cys54. The propeptide occupies 66-99 (ITKPSHPKPATLALTLQDYVTIIENFPSLKTQST).

It belongs to the beta-defensin family.

It is found in the secreted. Its function is as follows. Has antibacterial activity. This is Beta-defensin 127 (DEFB127) from Pan troglodytes (Chimpanzee).